Reading from the N-terminus, the 387-residue chain is Acetate kinase (387 aa).

Position 14 (N14) interacts with Mg(2+). K21 contributes to the ATP binding site. R80 serves as a coordination point for substrate. D137 functions as the Proton donor/acceptor in the catalytic mechanism. ATP is bound by residues 197 to 201, 271 to 273, and 319 to 323; these read HLGNG, DFR, and GIGEN. Mg(2+) is bound at residue E373.

The protein belongs to the acetokinase family. Homodimer. The cofactor is Mg(2+). Mn(2+) is required as a cofactor.

The protein localises to the cytoplasm. The catalysed reaction is acetate + ATP = acetyl phosphate + ADP. It functions in the pathway metabolic intermediate biosynthesis; acetyl-CoA biosynthesis; acetyl-CoA from acetate: step 1/2. Functionally, catalyzes the formation of acetyl phosphate from acetate and ATP. Can also catalyze the reverse reaction. The polypeptide is Acetate kinase (Mycobacterium avium (strain 104)).